Here is a 168-residue protein sequence, read N- to C-terminus: Cyclic pyranopterin monophosphate synthase (168 aa).

Substrate contacts are provided by residues 81–83 (LCH) and 117–118 (ME). Asp-132 is an active-site residue.

It belongs to the MoaC family. In terms of assembly, homohexamer; trimer of dimers.

The enzyme catalyses (8S)-3',8-cyclo-7,8-dihydroguanosine 5'-triphosphate = cyclic pyranopterin phosphate + diphosphate. It functions in the pathway cofactor biosynthesis; molybdopterin biosynthesis. In terms of biological role, catalyzes the conversion of (8S)-3',8-cyclo-7,8-dihydroguanosine 5'-triphosphate to cyclic pyranopterin monophosphate (cPMP). This Deinococcus radiodurans (strain ATCC 13939 / DSM 20539 / JCM 16871 / CCUG 27074 / LMG 4051 / NBRC 15346 / NCIMB 9279 / VKM B-1422 / R1) protein is Cyclic pyranopterin monophosphate synthase.